Reading from the N-terminus, the 772-residue chain is Rho guanine nucleotide exchange factor 6 (772 aa).

One can recognise a Calponin-homology (CH) domain in the interval 1-111 (MNPEERVVTW…TLLAVNKATE (111 aa)). Residues 115–158 (SERPCGRSSSLSATTSSQTNPQAAVPSTTPEQQSEEKAAEMTEN) form a disordered region. The segment covering 122–133 (SSSLSATTSSQT) has biased composition (low complexity). Position 126 is a phosphoserine (Ser126). Phosphothreonine is present on Thr133. Residues 134-146 (NPQAAVPSTTPEQ) are compositionally biased toward polar residues. An SH3 domain is found at 160 to 219 (SHQLIVKARFNFKQTNEDELSVCKGDIIYVTRVEEGGWWEGTLNGRTGWFPSNYVREIKP). The residue at position 225 (Ser225) is a Phosphoserine. A DH domain is found at 241–421 (YYTVVLQNIL…KSLMGQCQDL (181 aa)). Residues 443 to 548 (DIKTLGNVIF…WMEQLNRLTK (106 aa)) enclose the PH domain. Ser488 carries the post-translational modification Phosphoserine. Residues 557 to 573 (SKTSSSSCSTHSSFSST) show a composition bias toward low complexity. A disordered region spans residues 557–581 (SKTSSSSCSTHSSFSSTGQPRGPLE). A phosphoserine mark is found at Ser640 and Ser680.

As to quaternary structure, interacts with PAK kinases through the SH3 domain. Interacts with GIT1. Interacts with PARVB. Component of cytoplasmic complexes, which also contain PXN, GIT1 and PAK1. Interacts with BIN2. Identified in a complex with BIN2 and GIT2. Interacts with PARVG; the guanine nucleotide exchange factor activity of ARHGEF6 is essential for PARVG-induced enhancement of cell spreading.

It localises to the cell projection. The protein localises to the lamellipodium. Functionally, acts as a RAC1 guanine nucleotide exchange factor (GEF). This is Rho guanine nucleotide exchange factor 6 (Arhgef6) from Rattus norvegicus (Rat).